The primary structure comprises 364 residues: Dual-specificity RNA methyltransferase RlmN (364 aa).

Glutamate 91 functions as the Proton acceptor in the catalytic mechanism. Residues 102-337 (GTLRITQCLS…AIIRKSKGQD (236 aa)) form the Radical SAM core domain. A disulfide bond links cysteine 109 and cysteine 342. [4Fe-4S] cluster is bound by residues cysteine 116, cysteine 120, and cysteine 123. S-adenosyl-L-methionine contacts are provided by residues 169-170 (GE), serine 201, 223-225 (SLH), and asparagine 299. Cysteine 342 acts as the S-methylcysteine intermediate in catalysis.

This sequence belongs to the radical SAM superfamily. RlmN family. The cofactor is [4Fe-4S] cluster.

It is found in the cytoplasm. It catalyses the reaction adenosine(2503) in 23S rRNA + 2 reduced [2Fe-2S]-[ferredoxin] + 2 S-adenosyl-L-methionine = 2-methyladenosine(2503) in 23S rRNA + 5'-deoxyadenosine + L-methionine + 2 oxidized [2Fe-2S]-[ferredoxin] + S-adenosyl-L-homocysteine. It carries out the reaction adenosine(37) in tRNA + 2 reduced [2Fe-2S]-[ferredoxin] + 2 S-adenosyl-L-methionine = 2-methyladenosine(37) in tRNA + 5'-deoxyadenosine + L-methionine + 2 oxidized [2Fe-2S]-[ferredoxin] + S-adenosyl-L-homocysteine. Specifically methylates position 2 of adenine 2503 in 23S rRNA and position 2 of adenine 37 in tRNAs. m2A2503 modification seems to play a crucial role in the proofreading step occurring at the peptidyl transferase center and thus would serve to optimize ribosomal fidelity. The polypeptide is Dual-specificity RNA methyltransferase RlmN (Nitratidesulfovibrio vulgaris (strain ATCC 29579 / DSM 644 / CCUG 34227 / NCIMB 8303 / VKM B-1760 / Hildenborough) (Desulfovibrio vulgaris)).